Reading from the N-terminus, the 92-residue chain is Large ribosomal subunit protein eL31 (92 aa).

This sequence belongs to the eukaryotic ribosomal protein eL31 family.

This is Large ribosomal subunit protein eL31 from Halobacterium salinarum (strain ATCC 29341 / DSM 671 / R1).